The primary structure comprises 464 residues: Asparagine--tRNA ligase (464 aa).

It belongs to the class-II aminoacyl-tRNA synthetase family. Homodimer.

Its subcellular location is the cytoplasm. It carries out the reaction tRNA(Asn) + L-asparagine + ATP = L-asparaginyl-tRNA(Asn) + AMP + diphosphate + H(+). The chain is Asparagine--tRNA ligase from Cytophaga hutchinsonii (strain ATCC 33406 / DSM 1761 / CIP 103989 / NBRC 15051 / NCIMB 9469 / D465).